We begin with the raw amino-acid sequence, 231 residues long: 7-cyano-7-deazaguanine synthase (231 aa).

8–18 serves as a coordination point for ATP; the sequence is FSGGQDSTTCL. The Zn(2+) site is built by Cys188, Cys197, Cys200, and Cys203.

It belongs to the QueC family. Requires Zn(2+) as cofactor.

The enzyme catalyses 7-carboxy-7-deazaguanine + NH4(+) + ATP = 7-cyano-7-deazaguanine + ADP + phosphate + H2O + H(+). The protein operates within purine metabolism; 7-cyano-7-deazaguanine biosynthesis. Functionally, catalyzes the ATP-dependent conversion of 7-carboxy-7-deazaguanine (CDG) to 7-cyano-7-deazaguanine (preQ(0)). This Salmonella paratyphi B (strain ATCC BAA-1250 / SPB7) protein is 7-cyano-7-deazaguanine synthase.